The following is a 428-amino-acid chain: Inward rectifier potassium channel 2 (428 aa).

Residues 1–81 (MGSVRTNRYS…IFTTCVDIRW (81 aa)) are Cytoplasmic-facing. S-nitrosocysteine is present on cysteine 76. The chain crosses the membrane as a helical span at residues 82–106 (RWMLVIFCLAFVLSWLFFGCVFWLI). The Extracellular portion of the chain corresponds to 107–128 (ALLHGDLDTSKVSKACVSEVNS). The helical; Pore-forming intramembrane region spans 129–140 (FTAAFLFSIETQ). The segment at residues 141-147 (TTIGYGF) is an intramembrane region (pore-forming). A Selectivity filter motif is present at residues 142-147 (TIGYGF). The Extracellular portion of the chain corresponds to 148–156 (RCVTDECPI). A helical membrane pass occupies residues 157–178 (AVFMVVFQSIVGCIIDAFIIGA). The Cytoplasmic portion of the chain corresponds to 179 to 428 (VMAKMAKPKK…PRPLRRESEI (250 aa)). Residues 181-208 (AKMAKPKKRNETLVFSHNAVIAMRDGKL) are polyphosphoinositide (PIP2)-binding. A disordered region spans residues 383 to 428 (TSKEEEEDSENGVPESTSTDSPPGIDLHNQASVPLEPRPLRRESEI). The PDZ-binding signature appears at 426 to 428 (SEI).

It belongs to the inward rectifier-type potassium channel (TC 1.A.2.1) family. KCNJ2 subfamily. In terms of assembly, homotetramer. Homomultimeric and heteromultimeric association with KCNJ4/Kir2.3. Can form heteromeric channels with Kir2.6/KCNJ18. Associates, via its PDZ-recognition domain, with a complex containing LIN7A, LIN7B, LIN7C, DLG1, CASK and APBA1. S-nitrosylation increases the open probability and inward rectifying currents. As to expression, prominently expressed in the central nervous system. Also found in other excitable tissues such as heart and skeletal muscle.

It is found in the cell membrane. The protein resides in the sarcolemma. Its subcellular location is the T-tubule. It carries out the reaction K(+)(in) = K(+)(out). Its activity is regulated as follows. Activated by phosphatidylinositol 4,5 biphosphate (PtdIns(4,5)P2). Its function is as follows. Inward rectifier potassium channels are characterized by a greater tendency to allow potassium to flow into the cell rather than out of it. Their voltage dependence is regulated by the concentration of extracellular potassium; as external potassium is raised, the voltage range of the channel opening shifts to more positive voltages. The inward rectification is mainly due to the blockage of outward current by internal magnesium. Can be blocked by extracellular barium and cesium. Probably participates in establishing action potential waveform and excitability of neuronal and muscle tissues. In Mus musculus (Mouse), this protein is Inward rectifier potassium channel 2 (Kcnj2).